An 82-amino-acid chain; its full sequence is uncharacterized protein (82 aa).

In terms of biological role, could be a silencing control element for the regulation of the restriction system. This is an uncharacterized protein from Herpetosiphon aurantiacus (Herpetosiphon giganteus).